Here is a 633-residue protein sequence, read N- to C-terminus: Threonine--tRNA ligase (633 aa).

Residues 1 to 61 (MPAIRLPDGS…DHDVDLAIVT (61 aa)) form the TGS domain. The segment at 242–533 (DHRKLGRQLD…LIEHHAGAMP (292 aa)) is catalytic. 3 residues coordinate Zn(2+): cysteine 333, histidine 384, and histidine 510.

It belongs to the class-II aminoacyl-tRNA synthetase family. Homodimer. Zn(2+) serves as cofactor.

The protein localises to the cytoplasm. It catalyses the reaction tRNA(Thr) + L-threonine + ATP = L-threonyl-tRNA(Thr) + AMP + diphosphate + H(+). In terms of biological role, catalyzes the attachment of threonine to tRNA(Thr) in a two-step reaction: L-threonine is first activated by ATP to form Thr-AMP and then transferred to the acceptor end of tRNA(Thr). Also edits incorrectly charged L-seryl-tRNA(Thr). In Laribacter hongkongensis (strain HLHK9), this protein is Threonine--tRNA ligase.